Consider the following 366-residue polypeptide: Ferredoxin--NADP reductase (366 aa).

FAD is bound by residues aspartate 51, glutamine 59, tyrosine 64, valine 104, phenylalanine 139, aspartate 308, and threonine 349.

Belongs to the ferredoxin--NADP reductase type 2 family. Homodimer. It depends on FAD as a cofactor.

The enzyme catalyses 2 reduced [2Fe-2S]-[ferredoxin] + NADP(+) + H(+) = 2 oxidized [2Fe-2S]-[ferredoxin] + NADPH. This Polaromonas sp. (strain JS666 / ATCC BAA-500) protein is Ferredoxin--NADP reductase.